We begin with the raw amino-acid sequence, 122 residues long: Large ribosomal subunit protein uL14 (122 aa).

The protein belongs to the universal ribosomal protein uL14 family. As to quaternary structure, part of the 50S ribosomal subunit. Forms a cluster with proteins L3 and L19. In the 70S ribosome, L14 and L19 interact and together make contacts with the 16S rRNA in bridges B5 and B8.

Functionally, binds to 23S rRNA. Forms part of two intersubunit bridges in the 70S ribosome. The polypeptide is Large ribosomal subunit protein uL14 (Mycobacterium leprae (strain TN)).